A 394-amino-acid chain; its full sequence is GTPase Obg (394 aa).

The region spanning 4-162 (SNFVDYVKIY…LMVILELKLL (159 aa)) is the Obg domain. One can recognise an OBG-type G domain in the interval 163 to 329 (ADVGLVGFPN…LKDILWTELN (167 aa)). Residues 169–176 (GFPNAGKS), 194–198 (FTTLE), 216–219 (DIPG), 283–286 (TKSD), and 310–312 (SSV) each bind GTP. Residues serine 176 and threonine 196 each coordinate Mg(2+). Residues 358 to 394 (KDMGEDEDFEYEYEEDADDDFDYEYEDENWDEEEEKK) form a disordered region. A compositionally biased stretch (acidic residues) spans 361–394 (GEDEDFEYEYEEDADDDFDYEYEDENWDEEEEKK).

Belongs to the TRAFAC class OBG-HflX-like GTPase superfamily. OBG GTPase family. In terms of assembly, monomer. It depends on Mg(2+) as a cofactor.

It is found in the cytoplasm. Its function is as follows. An essential GTPase which binds GTP, GDP and possibly (p)ppGpp with moderate affinity, with high nucleotide exchange rates and a fairly low GTP hydrolysis rate. Plays a role in control of the cell cycle, stress response, ribosome biogenesis and in those bacteria that undergo differentiation, in morphogenesis control. This Phocaeicola vulgatus (strain ATCC 8482 / DSM 1447 / JCM 5826 / CCUG 4940 / NBRC 14291 / NCTC 11154) (Bacteroides vulgatus) protein is GTPase Obg.